Consider the following 262-residue polypeptide: MWITQEITPYLRKEYTIEAKLLDVRSEHNILEIFKSKDFGEIAMLNRQLLFKNFLHIESELLAHMGGCTKKELKEVLIVDGFDLELAHQLFKYDTHIDFVQADEKILDSFISFFPHFHEVKNNKNFTHAKQLLDLDIKKYDLIFCLQEPDIHRIDGLKRMLKEDGVFISVAKHPLLEHVSMQNALKNMGGVFSVAMPFVAPLRILSNKGYIYASFKTHPLKDLMTPKIEALTSVRYYNEDIHRAAFALPKNLQEVFKDNIKS.

In terms of domain architecture, PABS spans 1–249; the sequence is MWITQEITPY…DIHRAAFALP (249 aa). Asn-29 is a binding site for S-methyl-5'-thioadenosine. Residue Asp-83 coordinates spermidine. Residue Asp-155 is the Proton acceptor of the active site.

Homodimer.

It is found in the cytoplasm. The catalysed reaction is S-adenosyl 3-(methylsulfanyl)propylamine + putrescine = S-methyl-5'-thioadenosine + spermidine + H(+). Its pathway is amine and polyamine biosynthesis; spermidine biosynthesis; spermidine from putrescine: step 1/1. Inhibited by methylglyoxal bis(cyclopentylamidinohydrazone)(MGBCP). In terms of biological role, involved in the cell growth and proliferation. Catalyzes the irreversible transfer of a propylamine group from the amino donor S-adenosylmethioninamine (decarboxy-AdoMet) to putrescine (1,4-diaminobutane) to yield spermidine. Spermidine cannot be used as an aminopropyl acceptor. The polypeptide is Polyamine aminopropyltransferase (Helicobacter pylori (strain ATCC 700392 / 26695) (Campylobacter pylori)).